The chain runs to 1199 residues: RNA-binding protein 20 (1199 aa).

3 disordered regions span residues 1–55 (MVLA…PQAS), 163–186 (PSTA…SLPS), and 320–346 (ERPP…PASQ). Over residues 25–42 (VMPGVQGPSVPQGQQGMQ) the composition is skewed to low complexity. The span at 43–52 (PLPPPPPPQP) shows a compositional bias: pro residues. Residues 170–183 (SPPSQTGGPGPSVS) are compositionally biased toward low complexity. The U1-type zinc finger occupies 410–444 (HLPHICSICDKKVFDLKDWELHVKGKLHAQKCLLF). The region spanning 520–595 (RVVHICNLPE…EKLLIRMSTR (76 aa)) is the RRM domain. Basic and acidic residues predominate over residues 626–636 (EADRYGPERPR). Disordered stretches follow at residues 626 to 685 (EADR…NGED), 720 to 884 (REKY…YPTN), and 944 to 1077 (GETL…SQAC). The interval 630 to 649 (YGPERPRSRSPMSRSLSPRS) is RS. Phosphoserine is present on residues serine 637, serine 639, serine 642, serine 644, and serine 651. Positions 638–649 (RSPMSRSLSPRS) are enriched in low complexity. Positions 667–685 (YAWRDEDRETVPRRENGED) are enriched in basic and acidic residues. Serine 728 is modified (phosphoserine). Composition is skewed to basic and acidic residues over residues 739–758 (KGRE…DKYP), 770–831 (RKEE…KESQ), and 859–868 (ENTRTKKGQD). Position 787 is a phosphoserine (serine 787). Serine 871, serine 873, and serine 955 each carry phosphoserine. A compositionally biased stretch (polar residues) spans 962–971 (VPSTSASCPN). 9 positions are modified to phosphoserine: serine 991, serine 1026, serine 1038, serine 1049, serine 1054, serine 1058, serine 1070, serine 1088, and serine 1093. Residues 1042–1055 (DDCKARGSPEDGSH) show a composition bias toward basic and acidic residues. The span at 1067–1077 (PTESDLQSQAC) shows a compositional bias: polar residues. Residues 1133 to 1164 (FYCKLCGLFYTSEEAAKVSHCRSTVHYRNLQK) form a Matrin-type zinc finger. The segment at 1172 to 1199 (EGLKETEGTDSPSPERGGIGPHLERKKL) is disordered. Phosphoserine is present on residues serine 1182 and serine 1184.

In terms of assembly, associates with components of the U1 and U2 U1 small nuclear ribonucleoprotein complexes. In terms of processing, phosphorylation regulates the subcellular localization. Phosphorylation of Ser-637 and Ser-639 in the RS (arginine/serine-rich) region promotes nuclear localization of the protein. In contrast, phosphorylation of the C-terminal disordered region promotes localization to cytoplasmic ribonucleoprotein granules. Predominantly expressed in striated muscle, with highest expression in the heart. In differentiating myoblasts, expression correlates with sarcomere assembly: expression peaks when alpha-actinin is localized mainly in mature Z bodies within the nascent myofiber and expression declines as the sarcomeres continue to mature. Also expressed in kidney.

It is found in the nucleus. The protein localises to the cytoplasm. The protein resides in the cytoplasmic ribonucleoprotein granule. Its function is as follows. RNA-binding protein that acts as a regulator of mRNA splicing of a subset of genes encoding key structural proteins involved in cardiac development, such as TTN (Titin), CACNA1C, CAMK2D or PDLIM5/ENH. Acts as a repressor of mRNA splicing: specifically binds the 5'UCUU-3' motif that is predominantly found within intronic sequences of pre-mRNAs, leading to the exclusion of specific exons in target transcripts. RBM20-mediated exon skipping is hormone-dependent and is essential for TTN isoform transition in both cardiac and skeletal muscles. RBM20-mediated exon skipping of TTN provides substrates for the formation of circular RNA (circRNAs) from the TTN transcripts. Together with RBM24, promotes the expression of short isoforms of PDLIM5/ENH in cardiomyocytes. The protein is RNA-binding protein 20 of Mus musculus (Mouse).